The sequence spans 297 residues: MKNTCSTNWKHHPAKYELIGLMAYPIRHSLSPEMQNKALEKAGLPFTYMAFEVDNDSFPGAIEGLKALKMRGTGVSMPNKQLACEYVDELTPAAKLVGAINTIVNDDGYLRGYNTDGTGHIRAIKESGFDIKGKTMVLLGAGGASTAIGAQGAIEGLKEIKLFNRRDEFFDKALAFAQRVNENTDCVVTVTDLADQQAFAEALASDDILTNGTKVGMKPLENKSLVNDISLLHPGLLVTECVYNPHMTKLLQQAQQAGCKTIDGYGMLLWQGAEQFTLWTGKDFPLEYVKQVMGFGA.

The substrate site is built by Lys80 and Asp116. Residues 141–144, 164–167, Lys214, 241–244, and Gly264 each bind NAD(+); these read AGGA, NRRD, and CVYN.

The protein belongs to the shikimate dehydrogenase family. Homodimer.

The catalysed reaction is L-quinate + NAD(+) = 3-dehydroquinate + NADH + H(+). It catalyses the reaction L-quinate + NADP(+) = 3-dehydroquinate + NADPH + H(+). The enzyme catalyses shikimate + NADP(+) = 3-dehydroshikimate + NADPH + H(+). It carries out the reaction shikimate + NAD(+) = 3-dehydroshikimate + NADH + H(+). Its pathway is metabolic intermediate biosynthesis; chorismate biosynthesis; chorismate from D-erythrose 4-phosphate and phosphoenolpyruvate: step 4/7. Functionally, the actual biological function of YdiB remains unclear, nor is it known whether 3-dehydroshikimate or quinate represents the natural substrate. Catalyzes the reversible NAD-dependent reduction of both 3-dehydroshikimate (DHSA) and 3-dehydroquinate to yield shikimate (SA) and quinate, respectively. It can use both NAD or NADP for catalysis, however it has higher catalytic efficiency with NAD. This is Quinate/shikimate dehydrogenase from Shigella dysenteriae serotype 1 (strain Sd197).